Consider the following 214-residue polypeptide: MNLSSASSTEEKAVTTVLWGCELSQERRTWTFRPQLEGKQSCRLLLHTICLGEKAKEEMHRVEILPPANQEDKKMQPVTIASLQASVLPMVSMVGVQLSPPVTFQLRAGSGPVFLSGQERYEASDLTWEEEEEEEGEEEEEEEEDDEDEDADISLEEQSPVKQVKRLVPQKQASVAKKKKLEKEEEEIRASVRDKSPVKKAKATARAKKPGFKK.

A disordered region spans residues 119 to 214 (ERYEASDLTW…ARAKKPGFKK (96 aa)). Over residues 127-155 (TWEEEEEEEGEEEEEEEEDDEDEDADISL) the composition is skewed to acidic residues. The segment at 129–152 (EEEEEEEGEEEEEEEEDDEDEDAD) is acidic tract A2. The Bipartite nuclear localization signal motif lies at 165–180 (KRLVPQKQASVAKKKK). A compositionally biased stretch (basic and acidic residues) spans 181–197 (LEKEEEEIRASVRDKSP). A compositionally biased stretch (basic residues) spans 198–214 (VKKAKATARAKKPGFKK).

This sequence belongs to the nucleoplasmin family. In terms of assembly, homopentamer, when bound to H2A-H2B dimers only. Homodecamer of two stacked pentamers, when bound to H2A-H2B dimers and H3-H4 tetramers simultaneously.

It localises to the nucleus. Its function is as follows. Core histones chaperone involved in chromatin reprogramming, specially during fertilization and early embryonic development. Probably involved in sperm DNA decondensation during fertilization. The protein is Nucleoplasmin-2 (NPM2) of Homo sapiens (Human).